Consider the following 463-residue polypeptide: Cysteine--tRNA ligase (463 aa).

C27 contacts Zn(2+). The 'HIGH' region signature appears at 29–39 (PTVYGLIHIGN). Positions 207, 232, and 236 each coordinate Zn(2+). The 'KMSKS' region signature appears at 264–268 (KMSKS). K267 contacts ATP.

It belongs to the class-I aminoacyl-tRNA synthetase family. As to quaternary structure, monomer. Zn(2+) is required as a cofactor.

Its subcellular location is the cytoplasm. It catalyses the reaction tRNA(Cys) + L-cysteine + ATP = L-cysteinyl-tRNA(Cys) + AMP + diphosphate. This is Cysteine--tRNA ligase from Pseudothermotoga lettingae (strain ATCC BAA-301 / DSM 14385 / NBRC 107922 / TMO) (Thermotoga lettingae).